The sequence spans 468 residues: Interferon-induced protein with tetratricopeptide repeats 2 (468 aa).

N-acetylserine is present on serine 2. TPR repeat units lie at residues 51 to 89 (ATMCNILAFVKHRRGQNASALKELEKAEQFIQQQHPDHV), 90 to 135 (EIRN…RIES), 136 to 171 (PELDCEEGWARLKCTRNQNERVKVCFEKALEKDPKN), 172 to 208 (PEFTSGWAISNYRLDFWPAQQNAVDSLKQAIRMSPNS), 242 to 275 (TDVLRSAARFYYKTHDKDRAIQLLSQALELLPNN), 276 to 328 (AYVY…MIKD), 329 to 359 (SCSYLAHLYVLAEQYKEADYYFQKGFKKELT), 360 to 398 (PGLKQLLHLRYGNFQFFQMKCEDKAIHQYLEGVKIRQKT), and 399 to 441 (KPKE…ESQQ). A disordered region spans residues 441-468 (QAAKVSERGQDSERPVFSPSLHEGGNEQ). The span at 445 to 454 (VSERGQDSER) shows a compositional bias: basic and acidic residues.

It belongs to the IFIT family. In terms of assembly, domain-swapped homodimer. Component of an interferon-dependent multiprotein complex, at least composed of IFIT1, IFIT2 and IFIT3. Interacts with IFIT1 and IFIT3. Interacts with STING1/MITA and disrupts its interaction with MAVS or TBK1. Interacts with EIF3E and EIF3C.

The protein localises to the cytoplasm. The protein resides in the endoplasmic reticulum. Its function is as follows. IFN-induced antiviral protein which inhibits expression of viral messenger RNAs lacking 2'-O-methylation of the 5' cap. The ribose 2'-O-methylation would provide a molecular signature to distinguish between self and non-self mRNAs by the host during viral infection. Viruses evolved several ways to evade this restriction system such as encoding their own 2'-O-methylase for their mRNAs or by stealing host cap containing the 2'-O-methylation (cap snatching mechanism). Binds AU-rich viral RNAs, with or without 5' triphosphorylation, RNA-binding is required for antiviral activity. Can promote apoptosis. In Cricetulus griseus (Chinese hamster), this protein is Interferon-induced protein with tetratricopeptide repeats 2 (IFIT2).